We begin with the raw amino-acid sequence, 177 residues long: Large ribosomal subunit protein uL6 (177 aa).

Belongs to the universal ribosomal protein uL6 family. As to quaternary structure, part of the 50S ribosomal subunit.

Its function is as follows. This protein binds to the 23S rRNA, and is important in its secondary structure. It is located near the subunit interface in the base of the L7/L12 stalk, and near the tRNA binding site of the peptidyltransferase center. The chain is Large ribosomal subunit protein uL6 from Actinobacillus pleuropneumoniae serotype 5b (strain L20).